The sequence spans 320 residues: MLVVAEKEIAGLMTPEAAFEAIEAVFASMARRKAYNFPVVREAIGHEDALYGFKGGFDASALVLGLKAGGYWPNNQKHNLINHQSTVFLFDPDTGRVSAAVGGNLLTALRTAAASAVSIKYLAPKGAKVLGMIGAGHQSAFQMRAAANVHRFEKVIGWNPHPEMLSRLADTAAELGLPFEAVELDRLGAEADVIVSITSSFSPLLMNEHVKGPTHIAAMGTDTKGKQELDPALVARARIFTDEVAQSVSIGECQHAIAAGLIREDQVGELGAVVAGDDPGRGDAEVTIFDGTGVGLQDLAVAQAVVELAKHKGVAQEVEI.

Lys67 acts as the Proton donor/acceptor in catalysis. NAD(+) contacts are provided by residues Arg110, 137–138 (HQ), Asn159, Ser199, 219–222 (MGTD), Lys226, and Gly291.

Belongs to the ornithine cyclodeaminase/mu-crystallin family. BhcD subfamily.

It carries out the reaction L-aspartate + NAD(+) = iminosuccinate + NADH + H(+). Imine reductase that catalyzes the NADH-dependent reduction of iminosuccinate to L-aspartate. Is essential for the growth of P.denitrificans in the presence of glycolate and glyoxylate since it functions in glyoxylate assimilation via the beta-hydroxyaspartate cycle (BHAC). Thereby BhcD regenerates the amino group donor for the first step of the BHAC. This is Iminosuccinate reductase from Paracoccus denitrificans (strain Pd 1222).